Consider the following 454-residue polypeptide: MTMITPVQAILASNQHFLDRQDVMESNVRSYPRKLPFAYAKAQGCWVTDVEGNEYLDFLAGAGTLALGHNHPILMQAIKDVLDSGLPLHTLDLTTPLKDAFSEELLSFFPKDKYILQFTGPSGADANEAAIKLAKTYTGRGNIIAFSGGFHGMTQGALALTGNLGAKNAVENLMPGVQFMPYPHEYRCPFGIGGEAGAKAVEQYFENFIEDVESGVVKPAAVILEAIQGEGGVVSAPISFLQKVREVTQKHGILMIVDEVQAGFCRSGRMFAFEHAGIEPDIIVMSKAVGGSLPLAVLAIRKEFDAWQPAGHTGTFRGNQLAMATGYASLKIMRDENLAQNAQERGEYLTNALRELSKEYPCIGNVRGRGLMMGIDIVDERQSKDATGAYPRDCELAAAIQKACFKNKLLLERGGRGGNVVRVLCAVNINQSECEEFIKRFKQSVVDALKVVRS.

K287 is modified (N6-(pyridoxal phosphate)lysine).

Belongs to the class-III pyridoxal-phosphate-dependent aminotransferase family. Pyridoxal 5'-phosphate serves as cofactor.

The catalysed reaction is L-2,4-diaminobutanoate + 2-oxoglutarate = L-aspartate 4-semialdehyde + L-glutamate. The protein operates within amine and polyamine biosynthesis; 1,3-diaminopropane biosynthesis; 1,3-diaminopropane from L-aspartate 4-semialdehyde: step 1/2. The sequence is that of Diaminobutyrate--2-oxoglutarate aminotransferase (dat) from Haemophilus influenzae (strain ATCC 51907 / DSM 11121 / KW20 / Rd).